The primary structure comprises 107 residues: Guanylin (107 aa).

The N-terminal stretch at 1 to 20 (MNTFLLSALCLGAWAALVGA) is a signal peptide. Positions 21-92 (VTVQDGDFSF…LNRLAVIAQD (72 aa)) are excised as a propeptide. 3 disulfides stabilise this stretch: C61-C74, C96-C104, and C99-C107.

It belongs to the guanylin family.

It localises to the secreted. Its function is as follows. Endogenous activator of intestinal guanylate cyclase. It stimulates this enzyme through the same receptor binding region as the heat-stable enterotoxins. The protein is Guanylin (GUCA2A) of Cavia porcellus (Guinea pig).